A 185-amino-acid chain; its full sequence is Ribosome-recycling factor (185 aa).

It belongs to the RRF family.

It localises to the cytoplasm. In terms of biological role, responsible for the release of ribosomes from messenger RNA at the termination of protein biosynthesis. May increase the efficiency of translation by recycling ribosomes from one round of translation to another. This chain is Ribosome-recycling factor, found in Trichlorobacter lovleyi (strain ATCC BAA-1151 / DSM 17278 / SZ) (Geobacter lovleyi).